The sequence spans 490 residues: Homoserine O-acetyltransferase (490 aa).

The region spanning 48–354 (NVILVCHALT…NSEYGHDAFL (307 aa)) is the AB hydrolase-1 domain. The active-site Nucleophile is serine 153. Residue arginine 223 participates in substrate binding. Active-site residues include aspartate 317 and histidine 350. A substrate-binding site is contributed by aspartate 351. CBS domains follow at residues 377 to 434 (MSHT…ANSI) and 438 to 490 (MTKN…LYEK).

The protein belongs to the AB hydrolase superfamily. MetX family. Homodimer.

The protein localises to the cytoplasm. It catalyses the reaction L-homoserine + acetyl-CoA = O-acetyl-L-homoserine + CoA. It functions in the pathway amino-acid biosynthesis; L-methionine biosynthesis via de novo pathway; O-acetyl-L-homoserine from L-homoserine: step 1/1. Functionally, transfers an acetyl group from acetyl-CoA to L-homoserine, forming acetyl-L-homoserine. The chain is Homoserine O-acetyltransferase from Methanosphaera stadtmanae (strain ATCC 43021 / DSM 3091 / JCM 11832 / MCB-3).